The following is a 334-amino-acid chain: MQLDNILSQLFENQALTKAESQYFFEQVIQGNVSNEQLAGALIALKVRGETIEEIAGAVEAAFANATAFPAPDYAFADIVGTGGDGQNTINISTASAIVAATLGYKVAKHGSRSVSSKTGASDVLSALGINVAISPQTARQALDENNLCFLFAPLYHAGFKHAVPVRQVLKTRTLFNILGPLVNPAHAKRQLLGVYSPEVLKIYAETVRSLNHQHSIVVHGAGLDEVTVHGETLVAEIEHGEIHYFSLTPEDFGIQRHSIEALKGGEPAENAEKITALLQGKGEAAHIDAVAVNTAMLMRTFGERDLKANVQRVKDLLSTDKAYQTLQNLAQYQ.

5-phospho-alpha-D-ribose 1-diphosphate-binding positions include Gly81, 84–85 (GD), Thr89, 91–94 (NIST), 109–117 (KHGSRSVSS), and Ala121. Gly81 is an anthranilate binding site. Ser93 contacts Mg(2+). Position 167 (Arg167) interacts with anthranilate. Mg(2+) is bound by residues Asp225 and Glu226.

It belongs to the anthranilate phosphoribosyltransferase family. In terms of assembly, homodimer. Mg(2+) is required as a cofactor.

The catalysed reaction is N-(5-phospho-beta-D-ribosyl)anthranilate + diphosphate = 5-phospho-alpha-D-ribose 1-diphosphate + anthranilate. It participates in amino-acid biosynthesis; L-tryptophan biosynthesis; L-tryptophan from chorismate: step 2/5. Catalyzes the transfer of the phosphoribosyl group of 5-phosphorylribose-1-pyrophosphate (PRPP) to anthranilate to yield N-(5'-phosphoribosyl)-anthranilate (PRA). This chain is Anthranilate phosphoribosyltransferase, found in Actinobacillus pleuropneumoniae serotype 7 (strain AP76).